A 576-amino-acid chain; its full sequence is TOX high mobility group box family member 3 (576 aa).

Disordered regions lie at residues 189–258 (NLGG…PQKP), 422–443 (TMVG…QHQM), and 519–563 (LQHM…QIQS). The span at 204-215 (ASKSATPSPSSS) shows a compositional bias: low complexity. The segment covering 223-239 (EANRAIGEKRAAPDSGK) has biased composition (basic and acidic residues). Basic residues predominate over residues 240-250 (KPKTPKKKKKK). The segment at residues 255–323 (PQKPVSAYAL…EYLKALAAYR (69 aa)) is a DNA-binding region (HMG box). Over residues 428–443 (PSTQVSPSVQTQQHQM) the composition is skewed to low complexity. Positions 528 to 542 (PSPRQHSPVASQITS) are enriched in polar residues. The segment covering 549–563 (SPQPASQQHQSQIQS) has biased composition (low complexity).

Homodimer. Interacts with CREB1; the interaction is not depolarization dependent. Interacts with CREBBP (via C-terminus). Interacts (via HGM box) with CITED1 (via C-terminus); the interaction increases estrogen-response element (ERE)-dependent transcription and protection against cell death. Interacts with CREB1 (phosphorylated form). Expressed mainly in epithelial cells. Expressed in the central nervous system (CNS), in the ileum and within the brain in the frontal and occipital lobe.

Its subcellular location is the nucleus. Functionally, transcriptional coactivator of the p300/CBP-mediated transcription complex. Activates transactivation through cAMP response element (CRE) sites. Protects against cell death by inducing antiapoptotic and repressing pro-apoptotic transcripts. Stimulates transcription from the estrogen-responsive or BCL-2 promoters. Required for depolarization-induced transcription activation of the C-FOS promoter in neurons. Associates with chromatin to the estrogen-responsive C3 promoter region. The sequence is that of TOX high mobility group box family member 3 (TOX3) from Homo sapiens (Human).